A 377-amino-acid chain; its full sequence is Histone deacetylase 8 (377 aa).

The segment at 14 to 324 (LVPVYIYSPE…WTYLTGVILG (311 aa)) is histone deacetylase. Ser39 bears the Phosphoserine mark. Asp101 serves as a coordination point for substrate. Catalysis depends on His143, which acts as the Proton acceptor. Gly151 provides a ligand contact to substrate. A divalent metal cation contacts are provided by Asp178, His180, and Asp267. A substrate-binding site is contributed by Tyr306.

This sequence belongs to the histone deacetylase family. HD type 1 subfamily. Interacts with PEPB2-MYH11, a fusion protein consisting of the 165 N-terminal residues of CBF-beta (PEPB2) with the tail region of MYH11 produced by the inversion Inv(16)(p13q22), a translocation associated with acute myeloid leukemia of M4EO subtype. The PEPB2-MYH1 fusion protein also interacts with RUNX1, a well known transcriptional regulator, suggesting that the interaction with HDAC8 may participate in the conversion of RUNX1 into a constitutive transcriptional repressor. Interacts with CBFA2T3. Interacts with phosphorylated SMG5/EST1B; this interaction protects SMG5 from ubiquitin-mediated degradation. Associates with alpha-SMA (smooth muscle alpha-actin). Requires a divalent metal cation as cofactor. In terms of processing, phosphorylated by PKA on serine 39. Phosphorylation reduces deacetylase activity observed preferentially on histones H3 and H4. Weakly expressed in most tissues. Expressed at higher level in heart, brain, kidney and pancreas and also in liver, lung, placenta, prostate and kidney.

The protein resides in the nucleus. Its subcellular location is the chromosome. The protein localises to the cytoplasm. It catalyses the reaction N(6)-acetyl-L-lysyl-[histone] + H2O = L-lysyl-[histone] + acetate. The enzyme catalyses N(6)-acetyl-L-lysyl-[protein] + H2O = L-lysyl-[protein] + acetate. It carries out the reaction N(6)-(2E)-butenoyl-L-lysyl-[protein] + H2O = (2E)-2-butenoate + L-lysyl-[protein]. With respect to regulation, its activity is inhibited by trichostatin A (TSA), suberoylanilide hydroxamic acid (SAHA), 3-(1-methyl-4-phenylacetyl-1H-2-pyrrolyl)-N-hydroxy-2-propenamide (APHA), 4-dimethylamino-N-(6-hydroxycarbamoyethyl)benzamide-N-hydroxy-7-(4-dimethylaminobenzoyl)aminoheptanamide (MS-344), 5-(4-methyl-benzoylamino)-biphenyl-3,4'-dicarboxylic acid 3-dimethylamide 4'-hydroxyamide (CRA-A) and butyrate. Functionally, histone deacetylase that catalyzes the deacetylation of lysine residues on the N-terminal part of the core histones (H2A, H2B, H3 and H4). Histone deacetylation gives a tag for epigenetic repression and plays an important role in transcriptional regulation, cell cycle progression and developmental events. Histone deacetylases act via the formation of large multiprotein complexes. Also involved in the deacetylation of cohesin complex protein SMC3 regulating release of cohesin complexes from chromatin. May play a role in smooth muscle cell contractility. In addition to protein deacetylase activity, also has protein-lysine deacylase activity: acts as a protein decrotonylase by mediating decrotonylation ((2E)-butenoyl) of histones. The protein is Histone deacetylase 8 of Homo sapiens (Human).